We begin with the raw amino-acid sequence, 118 residues long: Large ribosomal subunit protein bL20 (118 aa).

It belongs to the bacterial ribosomal protein bL20 family.

Functionally, binds directly to 23S ribosomal RNA and is necessary for the in vitro assembly process of the 50S ribosomal subunit. It is not involved in the protein synthesizing functions of that subunit. The sequence is that of Large ribosomal subunit protein bL20 from Buchnera aphidicola subsp. Acyrthosiphon pisum (strain 5A).